A 174-amino-acid chain; its full sequence is Disulfide bond formation protein B (174 aa).

Residues 1–14 (MLHIFYIYSKSRKF) lie on the Cytoplasmic side of the membrane. Residues 15-31 (WAILICSSISLISIALL) traverse the membrane as a helical segment. Residues 32–49 (NQFFFLLKPCILCIYQRC) lie on the Periplasmic side of the membrane. An intrachain disulfide couples C41 to C44. A helical membrane pass occupies residues 50–65 (SLFGITIAGLIALISP). Residues 66-72 (KTTLLRL) lie on the Cytoplasmic side of the membrane. Residues 73–90 (FSIFIWLYSAIKGLYFSN) traverse the membrane as a helical segment. Topologically, residues 91–146 (IHMQTTLHPSSSLTCDLFVSFPNWLPLNKWYPIIFDSKISNCYSYPQYLLYLEISQ) are periplasmic. A disulfide bridge links C105 with C132. Residues 147-165 (WMLLFFLIYLIIAIFTIIS) traverse the membrane as a helical segment. The Cytoplasmic portion of the chain corresponds to 166 to 174 (QCHNLFQKK).

The protein belongs to the DsbB family.

The protein resides in the cell inner membrane. In terms of biological role, required for disulfide bond formation in some periplasmic proteins. Acts by oxidizing the DsbA protein. This chain is Disulfide bond formation protein B, found in Blochmanniella floridana.